Reading from the N-terminus, the 305-residue chain is Probable 5-dehydro-4-deoxyglucarate dehydratase (305 aa).

Belongs to the DapA family.

It catalyses the reaction 5-dehydro-4-deoxy-D-glucarate + H(+) = 2,5-dioxopentanoate + CO2 + H2O. Its pathway is carbohydrate acid metabolism; D-glucarate degradation; 2,5-dioxopentanoate from D-glucarate: step 2/2. The polypeptide is Probable 5-dehydro-4-deoxyglucarate dehydratase (Xanthomonas campestris pv. campestris (strain B100)).